A 333-amino-acid chain; its full sequence is NADH-ubiquinone oxidoreductase chain 2 (333 aa).

The next 10 membrane-spanning stretches (helical) occupy residues 10-30 (WFIYFLITIFVLMMNSNNIFI), 57-77 (LIYYSVSVISSIFLFFMIIVY), 91-111 (FMVQMMFFLKIGTFPFHFWMI), 121-141 (QIFLMSTLIKFIPIYMMVSMT), 143-163 (INSWTLYFLITNSLYISFYAN), 170-190 (KLLACSTIFNSFYFIFILELN), 192-212 (NMFIAMIILYSFNYFLLISFL), 242-262 (MYPIFLSFVIKWNLIFMMVSV), 267-287 (WILFLLMISSMLMIWNYIIIL), and 313-333 (SYFALTLLSFNISFFITLNFL).

Belongs to the complex I subunit 2 family.

The protein resides in the mitochondrion inner membrane. The enzyme catalyses a ubiquinone + NADH + 5 H(+)(in) = a ubiquinol + NAD(+) + 4 H(+)(out). Functionally, core subunit of the mitochondrial membrane respiratory chain NADH dehydrogenase (Complex I) that is believed to belong to the minimal assembly required for catalysis. Complex I functions in the transfer of electrons from NADH to the respiratory chain. The immediate electron acceptor for the enzyme is believed to be ubiquinone. This chain is NADH-ubiquinone oxidoreductase chain 2 (ND2), found in Apis mellifera ligustica (Common honeybee).